A 25-amino-acid polypeptide reads, in one-letter code: Hemocyanin subunit 2 (25 aa).

It belongs to the tyrosinase family. Hemocyanin subfamily. In terms of tissue distribution, hemolymph.

Its subcellular location is the secreted. The protein resides in the extracellular space. Functionally, hemocyanins are copper-containing oxygen carriers occurring freely dissolved in the hemolymph of many mollusks and arthropods. This chain is Hemocyanin subunit 2, found in Carcinus maenas (Common shore crab).